A 206-amino-acid chain; its full sequence is Probable peptidyl-tRNA hydrolase (206 aa).

The active-site Proton acceptor is the histidine 48. Tyrosine 83, asparagine 85, and asparagine 137 together coordinate tRNA.

This sequence belongs to the PTH family.

The protein resides in the mitochondrion. The catalysed reaction is an N-acyl-L-alpha-aminoacyl-tRNA + H2O = an N-acyl-L-amino acid + a tRNA + H(+). Its function is as follows. Peptidyl-tRNA hydrolase involved in the recycling of tRNA-Lys from diacetyl-lysyl-tRNA-Lys and is important for mitochondrial function. This chain is Probable peptidyl-tRNA hydrolase (pth1), found in Schizosaccharomyces pombe (strain 972 / ATCC 24843) (Fission yeast).